The chain runs to 413 residues: Alpha-1-antitrypsin-like protein CM55-MS (413 aa).

Residues Met1 to Ala24 form the signal peptide. Gln25 bears the Pyrrolidone carboxylic acid mark. 4 N-linked (GlcNAc...) asparagine glycosylation sites follow: Asn65, Asn102, Asn165, and Asn266. The RCL stretch occupies residues Gly368–Arg387.

The protein belongs to the serpin family. As to expression, expressed in liver.

It localises to the secreted. Functionally, serine protease inhibitor. The polypeptide is Alpha-1-antitrypsin-like protein CM55-MS (Tamias sibiricus (Siberian chipmunk)).